Consider the following 197-residue polypeptide: Phosphoheptose isomerase (197 aa).

The SIS domain maps to 34–196 (MVQCLLGGNK…DRTLFPQDEQ (163 aa)). A substrate-binding site is contributed by 49–51 (NGG). Zn(2+) is bound by residues His-58 and Glu-62. Residues Glu-62, 91–92 (ND), 117–119 (STS), Ser-122, and Gln-172 contribute to the substrate site. The Zn(2+) site is built by Gln-172 and His-180.

The protein belongs to the SIS family. GmhA subfamily. As to quaternary structure, homotetramer. The cofactor is Zn(2+).

It localises to the cytoplasm. The catalysed reaction is 2 D-sedoheptulose 7-phosphate = D-glycero-alpha-D-manno-heptose 7-phosphate + D-glycero-beta-D-manno-heptose 7-phosphate. It functions in the pathway carbohydrate biosynthesis; D-glycero-D-manno-heptose 7-phosphate biosynthesis; D-glycero-alpha-D-manno-heptose 7-phosphate and D-glycero-beta-D-manno-heptose 7-phosphate from sedoheptulose 7-phosphate: step 1/1. Catalyzes the isomerization of sedoheptulose 7-phosphate in D-glycero-D-manno-heptose 7-phosphate. This Shewanella piezotolerans (strain WP3 / JCM 13877) protein is Phosphoheptose isomerase.